The primary structure comprises 425 residues: Adenylosuccinate synthetase (425 aa).

Residues 12–18 (GDEGKGK) and 40–42 (GHT) contribute to the GTP site. Asp13 serves as the catalytic Proton acceptor. Mg(2+)-binding residues include Asp13 and Gly40. Residues 13 to 16 (DEGK), 38 to 41 (NAGH), Thr127, Arg141, Gln222, Thr237, and Arg301 each bind IMP. Catalysis depends on His41, which acts as the Proton donor. 297-303 (AVTGRPR) contacts substrate. Residues Arg303, 329-331 (KID), and 411-413 (SVG) each bind GTP.

This sequence belongs to the adenylosuccinate synthetase family. In terms of assembly, homodimer. The cofactor is Mg(2+).

It localises to the cytoplasm. The enzyme catalyses IMP + L-aspartate + GTP = N(6)-(1,2-dicarboxyethyl)-AMP + GDP + phosphate + 2 H(+). Its pathway is purine metabolism; AMP biosynthesis via de novo pathway; AMP from IMP: step 1/2. Its function is as follows. Plays an important role in the de novo pathway of purine nucleotide biosynthesis. Catalyzes the first committed step in the biosynthesis of AMP from IMP. The chain is Adenylosuccinate synthetase from Fusobacterium nucleatum.